Reading from the N-terminus, the 97-residue chain is Large ribosomal subunit protein bL27 (97 aa).

Positions 1-10 (MVKLNLSNLQ) are enriched in polar residues. Positions 1 to 12 (MVKLNLSNLQHF) are excised as a propeptide. The segment at 1-38 (MVKLNLSNLQHFAHKKGGGSTSNGRDSQAKRLGAKAAD) is disordered.

The protein belongs to the bacterial ribosomal protein bL27 family. Post-translationally, the N-terminus is cleaved by ribosomal processing cysteine protease Prp.

The polypeptide is Large ribosomal subunit protein bL27 (Streptococcus equi subsp. zooepidemicus (strain H70)).